A 306-amino-acid polypeptide reads, in one-letter code: Ribosomal protein L11 methyltransferase (306 aa).

S-adenosyl-L-methionine contacts are provided by Thr154, Gly179, Asp201, and Asn242.

Belongs to the methyltransferase superfamily. PrmA family.

The protein localises to the cytoplasm. It catalyses the reaction L-lysyl-[protein] + 3 S-adenosyl-L-methionine = N(6),N(6),N(6)-trimethyl-L-lysyl-[protein] + 3 S-adenosyl-L-homocysteine + 3 H(+). Methylates ribosomal protein L11. This chain is Ribosomal protein L11 methyltransferase, found in Xanthomonas campestris pv. campestris (strain 8004).